A 428-amino-acid chain; its full sequence is Serine--tRNA ligase (428 aa).

235–237 is a binding site for L-serine; sequence TAE. 266–268 contacts ATP; that stretch reads RSE. E289 lines the L-serine pocket. 353–356 contributes to the ATP binding site; that stretch reads EISS. Residue S389 coordinates L-serine.

This sequence belongs to the class-II aminoacyl-tRNA synthetase family. Type-1 seryl-tRNA synthetase subfamily. Homodimer. The tRNA molecule binds across the dimer.

The protein localises to the cytoplasm. It carries out the reaction tRNA(Ser) + L-serine + ATP = L-seryl-tRNA(Ser) + AMP + diphosphate + H(+). It catalyses the reaction tRNA(Sec) + L-serine + ATP = L-seryl-tRNA(Sec) + AMP + diphosphate + H(+). It functions in the pathway aminoacyl-tRNA biosynthesis; selenocysteinyl-tRNA(Sec) biosynthesis; L-seryl-tRNA(Sec) from L-serine and tRNA(Sec): step 1/1. In terms of biological role, catalyzes the attachment of serine to tRNA(Ser). Is also able to aminoacylate tRNA(Sec) with serine, to form the misacylated tRNA L-seryl-tRNA(Sec), which will be further converted into selenocysteinyl-tRNA(Sec). In Shewanella denitrificans (strain OS217 / ATCC BAA-1090 / DSM 15013), this protein is Serine--tRNA ligase.